Here is a 149-residue protein sequence, read N- to C-terminus: Oligosaccharyltransferase complex subunit ostc-B (149 aa).

Residues 1-32 lie on the Cytoplasmic side of the membrane; that stretch reads MESLYRIPFTVLECPNLKLKKPSWLHMPSAMT. Residues 33 to 53 form a helical membrane-spanning segment; sequence VYAMVVVSYFLITGGIIYDVI. Residues 54–83 lie on the Extracellular side of the membrane; it reads VEPPSVGSMTDEHGHQRPVAFLAYRVNGQY. A helical membrane pass occupies residues 84 to 104; it reads IMEGLASSFLFTMGGLGFIIL. At 105–117 the chain is on the cytoplasmic side; it reads DRSNAPNIPKLNR. Residues 118–138 traverse the membrane as a helical segment; the sequence is FLLLFIGFVCVLLSFFMARVF. The Extracellular portion of the chain corresponds to 139 to 149; it reads MRMKLPGYLMG.

This sequence belongs to the OSTC family. As to quaternary structure, specific component of the STT3A-containing form of the oligosaccharyltransferase (OST) complex.

Its subcellular location is the membrane. Its pathway is protein modification; protein glycosylation. Functionally, specific component of the STT3A-containing form of the oligosaccharyl transferase (OST) complex that catalyzes the initial transfer of a defined glycan (Glc(3)Man(9)GlcNAc(2) in eukaryotes) from the lipid carrier dolichol-pyrophosphate to an asparagine residue within an Asn-X-Ser/Thr consensus motif in nascent polypeptide chains, the first step in protein N-glycosylation. N-glycosylation occurs cotranslationally and the complex associates with the Sec61 complex at the channel-forming translocon complex that mediates protein translocation across the endoplasmic reticulum (ER). All subunits are required for a maximal enzyme activity. This chain is Oligosaccharyltransferase complex subunit ostc-B, found in Xenopus laevis (African clawed frog).